Consider the following 284-residue polypeptide: MGRKKKSRASTTEEDEIEMDNAGPSSETSLYEVLGVERRATSQEIRKAYHKLALKLHPDKNQDDKEAKDKFQQLQKVISILGDEEKRAVYDQTGSIDDADIPGDAFENLRDFFRDMYKKVNEADIEEFEANYRGSESEKKDLLELFNKFKGKMNRLFCSMLCSDPKLDSHRFKDMLDEAIAAGEVKSSKAYEKWANKISETKPPTSPLRKRKKKKSAAKDSETDLCLMIAKRQEERKGKVDSMFSSLISRYGGDAEAEPTEEEFEAAQRRIESKRKPSKKSRGK.

Disordered stretches follow at residues 1 to 30 (MGRK…ETSL), 196 to 221 (NKIS…AKDS), and 252 to 284 (GGDA…SRGK). The Nuclear localization signal motif lies at 3-6 (RKKK). Residues 29–94 (SLYEVLGVER…EKRAVYDQTG (66 aa)) enclose the J domain. The short motif at 209-215 (RKRKKKK) is the Nuclear localization signal element. The segment covering 255–265 (AEAEPTEEEFE) has biased composition (acidic residues). The segment covering 266 to 275 (AAQRRIESKR) has biased composition (basic and acidic residues).

The protein belongs to the DnaJ family. C/III subfamily. As to expression, highly expressed in leaves, flowers and siliques, and to lower extent in roots.

The protein localises to the nucleus. Plays a continuous role in plant development probably in the structural organization of compartments. The protein is Chaperone protein dnaJ 6 (ATJ6) of Arabidopsis thaliana (Mouse-ear cress).